Here is a 581-residue protein sequence, read N- to C-terminus: MSAILSVDDLNDFISPGVACIKPIETLPTAAPPAGDANSSLEVEVILDGQQPEAKSNAPPAEISLTDCLACSGCVTSAEAVLVSLQSHNEVLNMLDSAPALKLVGPDANGKHSVQGLENSDAKLYVASVSPQSRASLAAACGNGVTEQQAGRMIEQLFLGEQGLARGGKWGNKFTWVVDTNTAREATLVLGSDEVLGGLIAPSDKAATPVLTASCPGWVCYAEKTHPYVLPHLSRVKSPQALMGTLLKTSLSRILDIAPERIWHLAVMPCFDKKLEASREELTDAVWAGDGKPGRGVRDVDCVITSKEVLMLAASRGFDFFSLSASMPPQTPRFPDQLIHDFLFRPGHRQQSREAGTSGGNMHFILRHLQAKNPGSQIQTVPGRNADVVEYKLIAEAGEVMFKAARYYGFRNIQNLVRKLKPAKTSRMPGGKPFGSAKRPAGKASGLDYGYVEVMACPGGCTNGGGQIKVDDQVVVDRKGLAVKPGPQEQKEWQKEVDEAYFSGDESGSRAQDESLDLVVDGISPSHIRNVLTHWSTLTGIQLERLAYTSYREVVSDVGKEKKMTDTERVVQLAGKIGGGW.

Cys-20, Cys-68, Cys-71, Cys-74, Cys-215, Cys-270, Cys-457, and Cys-461 together coordinate [4Fe-4S] cluster.

This sequence belongs to the NARF family.

Functionally, component of the cytosolic Fe/S protein assembly machinery. Required for maturation of extramitochondrial Fe/S proteins. May play a role in the transfer of pre-assembled Fe/S clusters to target apoproteins. In Neurospora crassa (strain ATCC 24698 / 74-OR23-1A / CBS 708.71 / DSM 1257 / FGSC 987), this protein is Cytosolic Fe-S cluster assembly factor nar-1 (nar-1).